Reading from the N-terminus, the 260-residue chain is Triosephosphate isomerase (260 aa).

A substrate-binding site is contributed by N11–K13. H103 acts as the Electrophile in catalysis. Residue E175 is the Proton acceptor of the active site. Residues G181, S220, and G241–G242 contribute to the substrate site.

The protein belongs to the triosephosphate isomerase family. Homodimer.

It localises to the cytoplasm. The enzyme catalyses D-glyceraldehyde 3-phosphate = dihydroxyacetone phosphate. Its pathway is carbohydrate biosynthesis; gluconeogenesis. The protein operates within carbohydrate degradation; glycolysis; D-glyceraldehyde 3-phosphate from glycerone phosphate: step 1/1. Functionally, involved in the gluconeogenesis. Catalyzes stereospecifically the conversion of dihydroxyacetone phosphate (DHAP) to D-glyceraldehyde-3-phosphate (G3P). The chain is Triosephosphate isomerase from Shewanella halifaxensis (strain HAW-EB4).